A 411-amino-acid polypeptide reads, in one-letter code: UPF0754 membrane protein Npun_R4433 (411 aa).

A run of 2 helical transmembrane segments spans residues 3–23 and 387–407; these read WSHLWLYVSPPVLGGIIGYFT and IVTLGGVLGFVIGLLQTVFLV.

The protein belongs to the UPF0754 family.

The protein resides in the cell inner membrane. This chain is UPF0754 membrane protein Npun_R4433, found in Nostoc punctiforme (strain ATCC 29133 / PCC 73102).